Here is an 812-residue protein sequence, read N- to C-terminus: MTGIEQKTPVGGSETGGADGLYAVLPLRDIVVFPHMIVPLFVGREKSIRALEEVMGVDKQILLATQKNAADDDPAPDAIYEIGTIANVLQLLKLPDGTVKVLVEGTARAKISKFTDREDYHEAYAAALQEPEEDAVEIEALARSVVPDFENYVKLNKKISPEVVGAASQIDDYSKLADTVASHLAIKIPEKQEMLSVLSVRERLEKALSFMEAEISVLQVEKRIRSRVKRQMEKTQREYYLNEQMKAIQKELGDSEDGRDEVAEIEERITKTKLSKEAREKALAELKKLRSMSPMSAEATVVRNYLDWLLSIPWGKKSKVKQDLNFAQEVLDAEHFGLGKVKERIVEYLAVQARSTKIKGPILCLVGPPGVGKTSLARSIAKATGREYVRMSLGGVRDEAEIRGHRRTYIGSMPGKVIQSMKKAKKSNPLFLLDEIDKMGQDFRGDPSSAMLEVLDPEQNATFMDHYLEVEYDLSNVMFVTTANTMNIPVPLLDRMEIIRIAGYTEDEKLEIAKRHLLPKAIKDHALQPKEFSVTEDALRNVIRHYTREAGVRSLEREVMTLARKAVTEILKTKKKSVKITDKNLSDYLGVEKFRFGQIDGEDQVGVVTGLAWTEVGGELLTIEGVMMPGKGRMTVTGNLRDVMKESISAAASYVRSRAIDFGIEPPLFDKRDIHVHVPEGATPKDGPSAGIAMVTAIVSVLTGIPVRKDIAMTGEVTLRGRVLPIGGLKEKLLATLRGGIKKVLIPEENAKDLAEIPDNVKNNLEIVPVSRVGEVLKHALVRQPEPIEWTEQENPTAVPPVEDEAGASLAH.

The Lon N-terminal domain occupies Tyr-22 to Ile-215. ATP is bound at residue Gly-367–Thr-374. Positions Glu-602–Arg-783 constitute a Lon proteolytic domain. Catalysis depends on residues Ser-689 and Lys-732. The interval Pro-787–His-812 is disordered.

Belongs to the peptidase S16 family. Homohexamer. Organized in a ring with a central cavity.

The protein localises to the cytoplasm. It catalyses the reaction Hydrolysis of proteins in presence of ATP.. In terms of biological role, ATP-dependent serine protease that mediates the selective degradation of mutant and abnormal proteins as well as certain short-lived regulatory proteins. Required for cellular homeostasis and for survival from DNA damage and developmental changes induced by stress. Degrades polypeptides processively to yield small peptide fragments that are 5 to 10 amino acids long. Binds to DNA in a double-stranded, site-specific manner. Required for wild-type virulence during the initial stages of infection in the mouse model, but not essential for the establishment and maintenance of chronic infection in this host. The sequence is that of Lon protease from Brucella abortus (strain 2308).